The primary structure comprises 385 residues: Probable endopeptidase MT2245 (385 aa).

Residues 235–257 (AALPPGAPPGDGPAPGVAPPPGG) show a composition bias toward pro residues. A disordered region spans residues 235-268 (AALPPGAPPGDGPAPGVAPPPGGMPGLPFVQPDG). Residues 270–385 (GGDRTAVVQA…SGPIYDARRY (116 aa)) form the NlpC/P60 domain. C300 (nucleophile) is an active-site residue. H348 (proton acceptor) is an active-site residue. H360 is a catalytic residue.

The protein belongs to the peptidase C40 family.

The protein is Probable endopeptidase MT2245 of Mycobacterium tuberculosis (strain CDC 1551 / Oshkosh).